The primary structure comprises 143 residues: 3-hydroxyacyl-[acyl-carrier-protein] dehydratase FabZ (143 aa).

Residue His-48 is part of the active site.

The protein belongs to the thioester dehydratase family. FabZ subfamily.

The protein localises to the cytoplasm. The catalysed reaction is a (3R)-hydroxyacyl-[ACP] = a (2E)-enoyl-[ACP] + H2O. Functionally, involved in unsaturated fatty acids biosynthesis. Catalyzes the dehydration of short chain beta-hydroxyacyl-ACPs and long chain saturated and unsaturated beta-hydroxyacyl-ACPs. The chain is 3-hydroxyacyl-[acyl-carrier-protein] dehydratase FabZ from Roseiflexus castenholzii (strain DSM 13941 / HLO8).